We begin with the raw amino-acid sequence, 93 residues long: MARSLKKGPFADPHLLKKIEAQADSEKKSVIKTWSRRSTIFPSFIGFTIAVYDGRKHVPVFVQEDMVGHKLGEFVPTRTFKGHKADDKKTGKK.

Belongs to the universal ribosomal protein uS19 family.

Functionally, protein S19 forms a complex with S13 that binds strongly to the 16S ribosomal RNA. The polypeptide is Small ribosomal subunit protein uS19 (Leuconostoc citreum (strain KM20)).